A 118-amino-acid polypeptide reads, in one-letter code: UPF0295 protein BCG9842_B4782 (118 aa).

Helical transmembrane passes span 12–32 and 43–63; these read IRTF…LGVF and FMMV…WIGM.

This sequence belongs to the UPF0295 family.

It localises to the cell membrane. This Bacillus cereus (strain G9842) protein is UPF0295 protein BCG9842_B4782.